We begin with the raw amino-acid sequence, 126 residues long: MNFPADLKYTKDHEWIRVEGDVAYVGITDYAQGELGEIVYVDITTEGETVAKEEVFGTIEAVKTVSDLFMPVSGEVLEVNAELEDAPELVNEDAYGKGWLIKISLTDASELEELLSAEDYQKLIAK.

In terms of domain architecture, Lipoyl-binding spans 22–104 (VAYVGITDYA…YGKGWLIKIS (83 aa)). At K63 the chain carries N6-lipoyllysine.

Belongs to the GcvH family. In terms of assembly, the glycine cleavage system is composed of four proteins: P, T, L and H. The cofactor is (R)-lipoate.

Its function is as follows. The glycine cleavage system catalyzes the degradation of glycine. The H protein shuttles the methylamine group of glycine from the P protein to the T protein. This Parabacteroides distasonis (strain ATCC 8503 / DSM 20701 / CIP 104284 / JCM 5825 / NCTC 11152) protein is Glycine cleavage system H protein.